The chain runs to 1246 residues: Zinc finger protein 687a (1246 aa).

A compositionally biased stretch (basic and acidic residues) spans 24–47; that stretch reads KEAIQSDTHGNHNEHSSVVGKERS. Positions 24–387 are disordered; the sequence is KEAIQSDTHG…PTLVESASDA (364 aa). Composition is skewed to polar residues over residues 88-111 and 163-195; these read GEFSSADESQKSPQKGPSKDSSVP and AFTNHPASTFQSLPLSNHPSVSSHLISPNFSSK. A compositionally biased stretch (low complexity) spans 287–301; sequence SSTNPTSLTSTNNLP. Positions 302-317 are enriched in basic and acidic residues; sequence VEEKDLEHIIEERDSP. Over residues 326 to 338 the composition is skewed to polar residues; sequence QSRTSLPSNSQGA. Composition is skewed to basic and acidic residues over residues 341-350 and 360-375; these read SKQRITREEA and MQEKVDYGAEATEGKS. Residues 587–619 form a C2H2-type 1 zinc finger; that stretch reads YRCLECGDAFALERSLARHYDRRSMRIEVTCNH. A C2H2-type 2; degenerate zinc finger spans residues 696-719; it reads HSCPECWSTFKGKQELVAHFQEVE. C2H2-type zinc fingers lie at residues 817-840, 854-876, and 885-908; these read HKCPSCPMAFKSSSGAESHCASQH, YKCVMCRTVFTQKSLLSVHIDTH, and FKCPDCNKLFTQRTSLLEHVKDTH. Positions 907 to 953 are disordered; sequence THRETSNHDGTSTQNSLVKMESSDGEEWGRDEEEDKGKVSDANSAVP. Residues 914 to 923 are compositionally biased toward polar residues; that stretch reads HDGTSTQNSL. The segment covering 929–940 has biased composition (acidic residues); it reads SDGEEWGRDEEE. C2H2-type zinc fingers lie at residues 958 to 981 and 988 to 1011; these read WSCSQCQTHYTDKENYISHMTEQH and FPCTLCEGSFSSSSSLRRHIRVKH. Residues 1018 to 1044 form a C2H2-type 8; degenerate zinc finger; that stretch reads FYCQLCTGEKRSFSSKLILEKHIQAQH. The tract at residues 1045–1093 is disordered; it reads AGERGTATQSQAVPQFTDGADSSSEHDAGVLGGSSVEPESRLAESTLTR. 2 C2H2-type zinc fingers span residues 1137 to 1160 and 1210 to 1232; these read AQCQQCGACFASSSSLSRHLFISH and HICKVCGRYFSKPADLNTHFRTH.

The protein belongs to the krueppel C2H2-type zinc-finger protein family. As to expression, widely expressed with highest levels in kidney, spleen and ovary.

The protein resides in the nucleus. In terms of biological role, may be involved in transcriptional regulation. This Danio rerio (Zebrafish) protein is Zinc finger protein 687a (znf687a).